We begin with the raw amino-acid sequence, 391 residues long: Formate-dependent phosphoribosylglycinamide formyltransferase (391 aa).

Residues 20–21 (EL) and glutamate 80 contribute to the N(1)-(5-phospho-beta-D-ribosyl)glycinamide site. ATP is bound by residues arginine 112, lysine 153, 158–163 (SSGKGQ), 193–196 (EGFV), and glutamate 201. Residues 117-306 (RLAAETLGLP…EFALHVRAIL (190 aa)) enclose the ATP-grasp domain. Mg(2+) contacts are provided by glutamate 265 and glutamate 277. Residues aspartate 284, lysine 354, and 361 to 362 (RR) contribute to the N(1)-(5-phospho-beta-D-ribosyl)glycinamide site.

It belongs to the PurK/PurT family. In terms of assembly, homodimer.

The enzyme catalyses N(1)-(5-phospho-beta-D-ribosyl)glycinamide + formate + ATP = N(2)-formyl-N(1)-(5-phospho-beta-D-ribosyl)glycinamide + ADP + phosphate + H(+). It functions in the pathway purine metabolism; IMP biosynthesis via de novo pathway; N(2)-formyl-N(1)-(5-phospho-D-ribosyl)glycinamide from N(1)-(5-phospho-D-ribosyl)glycinamide (formate route): step 1/1. Its function is as follows. Involved in the de novo purine biosynthesis. Catalyzes the transfer of formate to 5-phospho-ribosyl-glycinamide (GAR), producing 5-phospho-ribosyl-N-formylglycinamide (FGAR). Formate is provided by PurU via hydrolysis of 10-formyl-tetrahydrofolate. In Shewanella sp. (strain W3-18-1), this protein is Formate-dependent phosphoribosylglycinamide formyltransferase.